The primary structure comprises 597 residues: Electron transfer flavoprotein-ubiquinone oxidoreductase, mitochondrial (597 aa).

Position 53-67 (53-67 (VVIVGGGPSGLSAAI)) interacts with FAD. The stretch at 91–112 (IGGHTLSGAVIETRALDELIPN) is an intramembrane region. Positions 285 and 286 each coordinate a ubiquinone. The stretch at 409–426 (IDPATYDKNIRDTYVVKE) is an intramembrane region. Positions 540, 566, 569, and 572 each coordinate [4Fe-4S] cluster. The 4Fe-4S ferredoxin-type domain occupies 557–586 (KRLQINAQNCIHCKTCDIKDPQQNINWVTP).

It belongs to the ETF-QO/FixC family. In terms of assembly, monomer. Requires [4Fe-4S] cluster as cofactor. It depends on FAD as a cofactor.

It localises to the mitochondrion inner membrane. It catalyses the reaction a ubiquinone + reduced [electron-transfer flavoprotein] = a ubiquinol + oxidized [electron-transfer flavoprotein] + H(+). In terms of biological role, accepts electrons from ETF and reduces ubiquinone. The protein is Electron transfer flavoprotein-ubiquinone oxidoreductase, mitochondrial (let-721) of Caenorhabditis elegans.